Consider the following 143-residue polypeptide: Nucleoside diphosphate kinase (143 aa).

ATP-binding residues include K11, F59, R87, T93, R104, and N114. H117 (pros-phosphohistidine intermediate) is an active-site residue.

The protein belongs to the NDK family. In terms of assembly, homotetramer. Mg(2+) is required as a cofactor.

The protein localises to the cytoplasm. The enzyme catalyses a 2'-deoxyribonucleoside 5'-diphosphate + ATP = a 2'-deoxyribonucleoside 5'-triphosphate + ADP. The catalysed reaction is a ribonucleoside 5'-diphosphate + ATP = a ribonucleoside 5'-triphosphate + ADP. Its function is as follows. Major role in the synthesis of nucleoside triphosphates other than ATP. The ATP gamma phosphate is transferred to the NDP beta phosphate via a ping-pong mechanism, using a phosphorylated active-site intermediate. The protein is Nucleoside diphosphate kinase of Thioalkalivibrio sulfidiphilus (strain HL-EbGR7).